A 358-amino-acid polypeptide reads, in one-letter code: Phosphoserine aminotransferase (358 aa).

Arg41 contacts L-glutamate. Pyridoxal 5'-phosphate is bound by residues 75 to 76 (AS), Trp100, Thr148, Asp167, and Gln190. An N6-(pyridoxal phosphate)lysine modification is found at Lys191. Residue 233–234 (NT) coordinates pyridoxal 5'-phosphate.

It belongs to the class-V pyridoxal-phosphate-dependent aminotransferase family. SerC subfamily. In terms of assembly, homodimer. Pyridoxal 5'-phosphate serves as cofactor.

The protein resides in the cytoplasm. The enzyme catalyses O-phospho-L-serine + 2-oxoglutarate = 3-phosphooxypyruvate + L-glutamate. It catalyses the reaction 4-(phosphooxy)-L-threonine + 2-oxoglutarate = (R)-3-hydroxy-2-oxo-4-phosphooxybutanoate + L-glutamate. Its pathway is amino-acid biosynthesis; L-serine biosynthesis; L-serine from 3-phospho-D-glycerate: step 2/3. The protein operates within cofactor biosynthesis; pyridoxine 5'-phosphate biosynthesis; pyridoxine 5'-phosphate from D-erythrose 4-phosphate: step 3/5. In terms of biological role, catalyzes the reversible conversion of 3-phosphohydroxypyruvate to phosphoserine and of 3-hydroxy-2-oxo-4-phosphonooxybutanoate to phosphohydroxythreonine. This is Phosphoserine aminotransferase from Campylobacter jejuni subsp. jejuni serotype O:23/36 (strain 81-176).